The following is a 1233-amino-acid chain: Reverse gyrase 2 (1233 aa).

An RG N-terminal-type zinc finger spans residues 1–41; that stretch reads MNTIPSSNYLSSCPNCGRVISAERLYKGSVCSECLEEDREF. Residues Cys13, Cys16, Cys31, and Cys34 each contribute to the Zn(2+) site. Residues Gln89 and 106–113 each bind ATP; that span reads APPGLGKT. The Helicase ATP-binding domain occupies 93–296; sequence IIRVLRKESF…ALMGFRPGSS (204 aa). Positions 212 to 215 match the DEAD box motif; it reads DDVD. Residues 606 to 1233 form a topoisomerase I region; it reads QKVKTVLFIV…DIYYEIKSIR (628 aa). The 165-residue stretch at 610–774 folds into the Toprim domain; sequence TVLFIVESPN…NIKRAEFHEV (165 aa). Residue Glu616 participates in Mg(2+) binding. The RG C-terminal-type; atypical zinc finger occupies 691–720; sequence IKKCINGHQFTDFEQGNQCPKCHTTQIILD. The Zn(2+) site is built by Cys694, His698, Cys709, and Cys712. Asp743 provides a ligand contact to Mg(2+). A Topo IA-type catalytic domain is found at 790-1233; the sequence is NVNLVKSQIV…DIYYEIKSIR (444 aa). Tyr947 (O-(5'-phospho-DNA)-tyrosine intermediate) is an active-site residue.

The protein in the N-terminal section; belongs to the DEAD box helicase family. DDVD subfamily. It in the C-terminal section; belongs to the type IA topoisomerase family. As to quaternary structure, monomer. Zn(2+) serves as cofactor. It depends on Mg(2+) as a cofactor.

It localises to the cytoplasm. It catalyses the reaction ATP + H2O = ADP + phosphate + H(+). Modifies the topological state of DNA by introducing positive supercoils in an ATP-dependent process, increasing the linking number in steps of +1. Binds to single-stranded DNA, transiently cleaves and then rejoins the ends, introducing a positive supercoil in the process. The scissile phosphodiester is attacked by the catalytic tyrosine of the enzyme, resulting in the formation of a DNA-(5'-phosphotyrosyl)-enzyme intermediate. Probably involved in rewinding DNA strands in regions of the chromosome that have opened up to allow replication, transcription, DNA repair and/or for DNA protection. The chain is Reverse gyrase 2 from Sulfurisphaera tokodaii (strain DSM 16993 / JCM 10545 / NBRC 100140 / 7) (Sulfolobus tokodaii).